A 317-amino-acid polypeptide reads, in one-letter code: Ribosomal protein L11 methyltransferase (317 aa).

S-adenosyl-L-methionine contacts are provided by threonine 158, glycine 179, aspartate 201, and asparagine 244.

Belongs to the methyltransferase superfamily. PrmA family.

Its subcellular location is the cytoplasm. The enzyme catalyses L-lysyl-[protein] + 3 S-adenosyl-L-methionine = N(6),N(6),N(6)-trimethyl-L-lysyl-[protein] + 3 S-adenosyl-L-homocysteine + 3 H(+). Functionally, methylates ribosomal protein L11. The polypeptide is Ribosomal protein L11 methyltransferase (Streptococcus agalactiae serotype III (strain NEM316)).